Reading from the N-terminus, the 312-residue chain is Urease accessory protein 7 (312 aa).

Residues 28–86 (QEATGTDSHHAHHHHTPSGASSAISHTHDNMPHDHGQFHDHGPGLWTPEEHGHTHEHLE) are disordered. The histine rich nickel-binding domain stretch occupies residues 36–87 (HHAHHHHTPSGASSAISHTHDNMPHDHGQFHDHGPGLWTPEEHGHTHEHLEH). The segment covering 53 to 86 (HTHDNMPHDHGQFHDHGPGLWTPEEHGHTHEHLE) has biased composition (basic and acidic residues). Residues 115-122 (GPVGSGKT) carry the GTP binding P-loop motif. Residues 147–154 (TREDQEFL) carry the Switch domain 1 motif. Residues 171-172 (GG) carry the switch domain 2 motif.

It belongs to the SIMIBI class G3E GTPase family. UreG subfamily. URE4, URE6 and URE7 may form a complex that acts as a GTP-hydrolysis-dependent molecular chaperone, activating the urease apoprotein URE1.

Urease accessory protein that binds 2 nickel atoms likely via its conserved histidine-rich domain and supplies nickel for the functional urease URE1. Has probably a dual function as a nickel chaperone and GTPase. Plays a role in host brain invasion. This Cryptococcus neoformans var. grubii serotype A (strain H99 / ATCC 208821 / CBS 10515 / FGSC 9487) (Filobasidiella neoformans var. grubii) protein is Urease accessory protein 7.